The following is a 316-amino-acid chain: CXXC-type zinc finger protein 5 (316 aa).

Gly residues predominate over residues 1–10 (MSSLGGGSQD). The interval 1 to 95 (MSSLGGGSQD…SGGAGSMMGG (95 aa)) is disordered. Low complexity-rich tracts occupy residues 11–27 (AGGS…SGSG) and 36–50 (SATV…VADD). The segment at 250 to 291 (GKKKRKRCGMCAPCRRRINCEQCSSCRNRKTGHQICKFRKCE) adopts a CXXC-type zinc-finger fold. A Nuclear localization signal motif is present at residues 251-256 (KKKRKR). Positions 257, 260, 263, 269, 272, 275, 285, and 290 each coordinate Zn(2+).

As to quaternary structure, interacts with DVL1. Interacts with RBPJ. Expressed in neural stem cells (at protein level). Expressed in the dorsal telencephalon.

It is found in the nucleus. The protein localises to the cytoplasm. Functionally, may indirectly participate in activation of the NF-kappa-B and MAPK pathways. Required for DNA damage-induced ATM phosphorylation, p53 activation and cell cycle arrest. Involved in myelopoiesis. Acts as a mediator of BMP4-mediated modulation of canonical Wnt signaling activity in neural stem cells. Binds to the oxygen responsive element of COX4I2 and represses its transcription under hypoxia conditions (4% oxygen), as well as normoxia conditions (20% oxygen). May repress COX4I2 transactivation induced by CHCHD2 and RBPJ. Binds preferentially to DNA containing cytidine-phosphate-guanosine (CpG) dinucleotides over CpH (H=A, T, and C), hemimethylated-CpG and hemimethylated-hydroxymethyl-CpG. This Rattus norvegicus (Rat) protein is CXXC-type zinc finger protein 5 (Cxxc5).